The chain runs to 434 residues: Xylose isomerase (434 aa).

Active-site residues include His100 and Asp103. Residues Glu231, Glu267, His270, Asp295, Asp306, Asp308, and Asp338 each contribute to the Mg(2+) site.

This sequence belongs to the xylose isomerase family. As to quaternary structure, homotetramer. Mg(2+) is required as a cofactor.

It localises to the cytoplasm. It carries out the reaction alpha-D-xylose = alpha-D-xylulofuranose. The chain is Xylose isomerase from Ruegeria pomeroyi (strain ATCC 700808 / DSM 15171 / DSS-3) (Silicibacter pomeroyi).